The primary structure comprises 263 residues: Complement control protein C3 (263 aa).

Residues 1-19 form the signal peptide; the sequence is MKVESVTFLTLLGIGCVLS. 4 consecutive Sushi domains span residues 20–83, 84–145, 146–203, and 204–263; these read CCTI…QCIK, RRCP…ICES, VKCQ…TCQI, and VKCP…KCVR. 8 cysteine pairs are disulfide-bonded: cysteine 21–cysteine 70, cysteine 54–cysteine 81, cysteine 86–cysteine 126, cysteine 112–cysteine 143, cysteine 148–cysteine 190, cysteine 176–cysteine 201, cysteine 206–cysteine 248, and cysteine 234–cysteine 261.

This sequence belongs to the receptors of complement activation (RCA) family. In terms of assembly, heterodimer with A56 protein; disulfide-linked.

Its subcellular location is the virion membrane. The protein localises to the host cell membrane. The protein resides in the secreted. Serves to protect the virus against complement attack by inhibiting both classical and alternative pathways of complement activation. Binds C3b and C4b. The chain is Complement control protein C3 from Vaccinia virus (strain Copenhagen) (VACV).